The sequence spans 180 residues: Nucleoside triphosphate/diphosphate phosphatase (180 aa).

R26 functions as the Proton donor in the catalytic mechanism. Residues N90, D106, D108, D110, D123, and E126 each coordinate Mg(2+).

Belongs to the Ntdp family. Mg(2+) is required as a cofactor.

It catalyses the reaction a ribonucleoside 5'-triphosphate + H2O = a ribonucleoside 5'-diphosphate + phosphate + H(+). The catalysed reaction is a ribonucleoside 5'-diphosphate + H2O = a ribonucleoside 5'-phosphate + phosphate + H(+). Has nucleoside phosphatase activity towards nucleoside triphosphates and nucleoside diphosphates. The polypeptide is Nucleoside triphosphate/diphosphate phosphatase (Staphylococcus aureus (strain MSSA476)).